We begin with the raw amino-acid sequence, 375 residues long: Succinyl-diaminopimelate desuccinylase (375 aa).

Position 66 (His-66) interacts with Zn(2+). Asp-68 is a catalytic residue. Asp-99 is a Zn(2+) binding site. Glu-133 acts as the Proton acceptor in catalysis. Zn(2+) is bound by residues Glu-134, Glu-162, and His-348.

The protein belongs to the peptidase M20A family. DapE subfamily. In terms of assembly, homodimer. It depends on Zn(2+) as a cofactor. Co(2+) serves as cofactor.

It catalyses the reaction N-succinyl-(2S,6S)-2,6-diaminopimelate + H2O = (2S,6S)-2,6-diaminopimelate + succinate. It functions in the pathway amino-acid biosynthesis; L-lysine biosynthesis via DAP pathway; LL-2,6-diaminopimelate from (S)-tetrahydrodipicolinate (succinylase route): step 3/3. Functionally, catalyzes the hydrolysis of N-succinyl-L,L-diaminopimelic acid (SDAP), forming succinate and LL-2,6-diaminopimelate (DAP), an intermediate involved in the bacterial biosynthesis of lysine and meso-diaminopimelic acid, an essential component of bacterial cell walls. The protein is Succinyl-diaminopimelate desuccinylase of Photorhabdus laumondii subsp. laumondii (strain DSM 15139 / CIP 105565 / TT01) (Photorhabdus luminescens subsp. laumondii).